The chain runs to 234 residues: Eukaryotic translation initiation factor 3 subunit K (234 aa).

One can recognise a PCI domain in the interval 46-219; that stretch reads SDIEANLALL…EAKPATTTES (174 aa).

The protein belongs to the eIF-3 subunit K family. As to quaternary structure, component of the eukaryotic translation initiation factor 3 (eIF-3) complex.

It is found in the cytoplasm. In terms of biological role, component of the eukaryotic translation initiation factor 3 (eIF-3) complex, which is involved in protein synthesis of a specialized repertoire of mRNAs and, together with other initiation factors, stimulates binding of mRNA and methionyl-tRNAi to the 40S ribosome. The eIF-3 complex specifically targets and initiates translation of a subset of mRNAs involved in cell proliferation. This chain is Eukaryotic translation initiation factor 3 subunit K, found in Yarrowia lipolytica (strain CLIB 122 / E 150) (Yeast).